We begin with the raw amino-acid sequence, 337 residues long: Protein FAM169B (337 aa).

The interval 278–326 (STVHPKCSEEDTDTPGQASQEDGPTQFNHGESHKEWAVGEPERTQNGRR) is disordered. Positions 291–306 (TPGQASQEDGPTQFNH) are enriched in polar residues. The segment covering 307-322 (GESHKEWAVGEPERTQ) has biased composition (basic and acidic residues).

The protein belongs to the FAM169 family.

This Mus musculus (Mouse) protein is Protein FAM169B (Fam169b).